A 573-amino-acid chain; its full sequence is Mitochondrial distribution and morphology protein 34 (573 aa).

One can recognise an SMP-LTD domain in the interval 1-195 (MAFNFNWSPL…LPAIIHRLSL (195 aa)). Disordered regions lie at residues 301–326 (EGLG…SSPL), 349–433 (FSGY…RFPN), 499–521 (SREK…ITDA), and 550–573 (LVNN…AYGQ). A compositionally biased stretch (low complexity) spans 306-316 (GLMSPGSPALS). The segment covering 360 to 373 (RHTKARPTKKRKKR) has biased composition (basic residues). The span at 374-385 (VVDLRKQSKPTD) shows a compositional bias: basic and acidic residues. Over residues 396–409 (TETSTASTTFSSST) the composition is skewed to low complexity.

The protein belongs to the MDM34 family. Component of the ER-mitochondria encounter structure (ERMES) or MDM complex, composed of MMM1, MDM10, MDM12 and MDM34.

The protein localises to the mitochondrion outer membrane. In terms of biological role, component of the ERMES/MDM complex, which serves as a molecular tether to connect the endoplasmic reticulum (ER) and mitochondria. Components of this complex are involved in the control of mitochondrial shape and protein biogenesis, and function in nonvesicular lipid trafficking between the ER and mitochondria. MDM34 is required for the interaction of the ER-resident membrane protein MMM1 and the outer mitochondrial membrane-resident beta-barrel protein MDM10. The chain is Mitochondrial distribution and morphology protein 34 from Uncinocarpus reesii (strain UAMH 1704).